A 615-amino-acid chain; its full sequence is MCFPGSQISPARLYYLVSAPWICTGSLTSSRLPRRRESGPLRVPPRSVQAERILRLPAFGLPLLALLLVPLLPVRAQNPDAKVVSMGVEWLTRYGYLPPADPVHAQMQSLEKLQDAIKVMQRFAGLPETGQMDPMTIKTMRKPRCSLPDVLGAAGLVRRRRRYSLSGSVWKKRTLTWSIRSFSQKSQLSPQIVRTLLSYALAVWATESGLTFQEVNSQYQEPDIIIHFARAYHQDSYPFDGSGGTLAHAFFPGEHPISGDTHFDDEETWTFGSTDDNGIDLFAVAVHEFGHALGLGHSSAPNSIMRPFYQGPVGDPATYRLPQDDRDGLQQLYGRVSQNPNARPTRKPLVPPPQPPAMPPDSPATPVPDRCEGNFDAVANIRGEIFLFKGPWFWRLQPSGQLVSPRPAGLHRFWEGLPTHVKVIQAAYARPLDGRIILFSGPQFWVFQERQLEGAARPLVEFGLPPGEDVDAVFSWPHNGKTYLIRGQKYWRYDEVAARPDPGYPRALSLWDGAPFAPDDVTISNTGDTYFFKGTHFWRFAEGSVKAESDSPQPIGPKWLDCPAPNSDPRVTSPPKTTSKTRSCDCHCELNQASEQLSPLLLPLLPLVAGEVFSY.

The propeptide occupies M1–R162. The chain crosses the membrane as a helical span at residues I53–P73. The Cysteine switch motif lies at P143 to V150. Residues C145 and H287 each contribute to the Zn(2+) site. E288 is a catalytic residue. Positions 291 and 297 each coordinate Zn(2+). Positions V336–P366 are disordered. Positions L349–P366 are enriched in pro residues. 4 Hemopexin repeats span residues P368 to L417, V421 to P466, G467 to P515, and F516 to C562. C371 and C562 form a disulfide bridge. The segment at A547–R582 is disordered. The GPI-anchor amidated alanine moiety is linked to residue A593. The propeptide at S594 to Y615 is removed in mature form.

This sequence belongs to the peptidase M10A family. The cofactor is Zn(2+). Requires Ca(2+) as cofactor. The precursor is cleaved by a furin endopeptidase.

Its subcellular location is the cell membrane. In terms of biological role, may activate progelatinase A. The chain is Matrix metalloproteinase-25 (Mmp25) from Mus musculus (Mouse).